We begin with the raw amino-acid sequence, 303 residues long: NAD kinase (303 aa).

Asp71 acts as the Proton acceptor in catalysis. NAD(+) is bound by residues 71–72, 145–146, Arg156, Arg173, Asp175, 186–191, and Gln245; these read DG, ND, and TGYSLS.

It belongs to the NAD kinase family. A divalent metal cation serves as cofactor.

It localises to the cytoplasm. It carries out the reaction NAD(+) + ATP = ADP + NADP(+) + H(+). Its function is as follows. Involved in the regulation of the intracellular balance of NAD and NADP, and is a key enzyme in the biosynthesis of NADP. Catalyzes specifically the phosphorylation on 2'-hydroxyl of the adenosine moiety of NAD to yield NADP. This Magnetococcus marinus (strain ATCC BAA-1437 / JCM 17883 / MC-1) protein is NAD kinase.